We begin with the raw amino-acid sequence, 282 residues long: Undecaprenyl-diphosphatase (282 aa).

8 helical membrane passes run 1 to 21, 40 to 60, 89 to 109, 112 to 132, 153 to 173, 196 to 216, 228 to 248, and 258 to 278; these read MNLFQAIILGIIQGLTEFLPI, GAAFTAIIQIGTLAAVLIYFA, WMIAVGTIPIVVFGLTFKHEI, VLRSLYIVSASMIGLALVLVV, LSWTDAIIIGLAQAMALIPGS, FSFLLSLPSVFAAGMLELYQT, LNLAVATIAAFIFGYLSIAFL, and GIFIAYRLILGIGLIVMIGTG.

The protein belongs to the UppP family.

It localises to the cell inner membrane. It carries out the reaction di-trans,octa-cis-undecaprenyl diphosphate + H2O = di-trans,octa-cis-undecaprenyl phosphate + phosphate + H(+). Functionally, catalyzes the dephosphorylation of undecaprenyl diphosphate (UPP). Confers resistance to bacitracin. This is Undecaprenyl-diphosphatase from Chlorobaculum tepidum (strain ATCC 49652 / DSM 12025 / NBRC 103806 / TLS) (Chlorobium tepidum).